The primary structure comprises 510 residues: Sulfoquinovosyl transferase SQD2 (510 aa).

The N-terminal 83 residues, 1 to 83 (MTTLSSINLS…SNDMTITQVR (83 aa)), are a transit peptide targeting the chloroplast. At serine 88 the chain carries Phosphoserine. Residues 198–218 (PGVMVFGALAIAKMLSVPIVM) form a helical membrane-spanning segment.

This sequence belongs to the glycosyltransferase group 1 family. Glycosyltransferase 4 subfamily.

The protein resides in the plastid. The protein localises to the chloroplast membrane. The enzyme catalyses UDP-alpha-D-6-sulfoquinovose + a 1,2-diacyl-sn-glycerol = a 6-sulfo-alpha-D-quinovosyldiacylglycerol + UDP + H(+). Its pathway is glycolipid biosynthesis. In terms of biological role, catalyzes the transfer of the sulfoquinovose moiety from UDP-sulfoquinovose to diacylglycerol during sulfolipid biosynthesis. Sulfolipid contributes to maintaining a negatively charged lipid-water interface, a requirement for proper function of photosynthetic membranes. Sulfolipid may also function as a substitute of anionic phospholipids under phosphate-limited growth conditions. This chain is Sulfoquinovosyl transferase SQD2, found in Arabidopsis thaliana (Mouse-ear cress).